We begin with the raw amino-acid sequence, 698 residues long: Nitric oxide-associated protein 1 (698 aa).

The tract at residues 42–66 (FQHSSSLGRELPYDPVDTEGFGEGG) is disordered. Y77 is modified (phosphotyrosine). Disordered stretches follow at residues 80–134 (DPEP…DPAL) and 279–306 (LAPGHQGPQRPVKDEPQDGENPNPPNWS). Basic and acidic residues predominate over residues 102-126 (ERQRQQRREERRQQNLRARSREHPV). The CP-type G domain maps to 202-503 (LELVSAALRR…FYDTPGITKE (302 aa)).

The protein belongs to the TRAFAC class YlqF/YawG GTPase family. NOA1 subfamily. Homodimer or multimer. Interacts with mitochondrial complex I, DAP3, MRPL12 and MRPS27.

It localises to the mitochondrion inner membrane. Functionally, involved in regulation of mitochondrial protein translation and respiration. Plays a role in mitochondria-mediated cell death. May act as a scaffolding protein or stabilizer of respiratory chain supercomplexes. Binds GTP. In Homo sapiens (Human), this protein is Nitric oxide-associated protein 1 (NOA1).